Consider the following 96-residue polypeptide: Protein RnfH (96 aa).

It belongs to the UPF0125 (RnfH) family.

The sequence is that of Protein RnfH from Pectobacterium carotovorum subsp. carotovorum (strain PC1).